Here is a 425-residue protein sequence, read N- to C-terminus: Putative type I restriction enzyme MjaX specificity subunit (425 aa).

The protein belongs to the type-I restriction system S methylase family.

A putative specificity (S) subunit of a type I restriction enzyme thought to recognize 5'-TAGN(6)TGC-3'; the other subunits are unknown. The sequence is that of Putative type I restriction enzyme MjaX specificity subunit from Methanocaldococcus jannaschii (strain ATCC 43067 / DSM 2661 / JAL-1 / JCM 10045 / NBRC 100440) (Methanococcus jannaschii).